A 78-amino-acid polypeptide reads, in one-letter code: MSDTAERVKKIVVEHLGVDADKVTEQASFIDDLGADSLDTVELVMAFEEEFGVEIPDDAAETILTVGDAVKYIEKATA.

One can recognise a Carrier domain in the interval 2 to 77; that stretch reads SDTAERVKKI…DAVKYIEKAT (76 aa). S37 carries the O-(pantetheine 4'-phosphoryl)serine modification.

This sequence belongs to the acyl carrier protein (ACP) family. 4'-phosphopantetheine is transferred from CoA to a specific serine of apo-ACP by AcpS. This modification is essential for activity because fatty acids are bound in thioester linkage to the sulfhydryl of the prosthetic group.

It is found in the cytoplasm. It functions in the pathway lipid metabolism; fatty acid biosynthesis. Functionally, carrier of the growing fatty acid chain in fatty acid biosynthesis. The chain is Acyl carrier protein from Chelativorans sp. (strain BNC1).